The following is a 315-amino-acid chain: Voltage-dependent calcium channel gamma-3 subunit (315 aa).

The next 4 helical transmembrane spans lie at 8-28 (IQML…TIAV), 104-124 (SSVF…CVAA), 135-155 (ILSA…GIIV), and 181-201 (FGAF…HIYI). Position 248 is a phosphoserine (Ser-248).

This sequence belongs to the PMP-22/EMP/MP20 family. CACNG subfamily. The L-type calcium channel is composed of five subunits: alpha-1, alpha-2/delta, beta and gamma. Acts as an auxiliary subunit for AMPA-selective glutamate receptors (AMPARs). Found in a complex with GRIA1, GRIA2, GRIA3, GRIA4, CNIH2, CNIH3, CACNG2, CACNG4, CACNG5, CACNG7 and CACNG8. Interacts with AP4M1 and GRIA1; associates GRIA1 with the adaptor protein complex 4 (AP-4) to target GRIA1 to the somatodendritic compartment of neurons.

The protein localises to the membrane. Regulates the trafficking to the somatodendritic compartment and gating properties of AMPA-selective glutamate receptors (AMPARs). Promotes their targeting to the cell membrane and synapses and modulates their gating properties by slowing their rates of activation, deactivation and desensitization. Does not show subunit-specific AMPA receptor regulation and regulates all AMPAR subunits. Thought to stabilize the calcium channel in an inactivated (closed) state. This Homo sapiens (Human) protein is Voltage-dependent calcium channel gamma-3 subunit (CACNG3).